The primary structure comprises 408 residues: LL-diaminopimelate aminotransferase (408 aa).

Residues tyrosine 15 and glycine 42 each contribute to the substrate site. Pyridoxal 5'-phosphate contacts are provided by residues tyrosine 72, 108-109 (SK), tyrosine 132, asparagine 187, tyrosine 218, and 246-248 (SFS). 3 residues coordinate substrate: lysine 109, tyrosine 132, and asparagine 187. At lysine 249 the chain carries N6-(pyridoxal phosphate)lysine. Residues arginine 257 and asparagine 292 each coordinate pyridoxal 5'-phosphate. Residues asparagine 292 and arginine 388 each contribute to the substrate site.

The protein belongs to the class-I pyridoxal-phosphate-dependent aminotransferase family. LL-diaminopimelate aminotransferase subfamily. As to quaternary structure, homodimer. Pyridoxal 5'-phosphate serves as cofactor.

It carries out the reaction (2S,6S)-2,6-diaminopimelate + 2-oxoglutarate = (S)-2,3,4,5-tetrahydrodipicolinate + L-glutamate + H2O + H(+). Its pathway is amino-acid biosynthesis; L-lysine biosynthesis via DAP pathway; LL-2,6-diaminopimelate from (S)-tetrahydrodipicolinate (aminotransferase route): step 1/1. In terms of biological role, involved in the synthesis of meso-diaminopimelate (m-DAP or DL-DAP), required for both lysine and peptidoglycan biosynthesis. Catalyzes the direct conversion of tetrahydrodipicolinate to LL-diaminopimelate. This chain is LL-diaminopimelate aminotransferase, found in Prochlorococcus marinus (strain MIT 9303).